Consider the following 173-residue polypeptide: Mesencephalic astrocyte-derived neurotrophic factor homolog (173 aa).

The first 22 residues, 1–22, serve as a signal peptide directing secretion; the sequence is MKTAHLVVVVCFLAGALQTAVA. 4 disulfide bridges follow: Cys-28–Cys-114, Cys-31–Cys-103, Cys-61–Cys-72, and Cys-148–Cys-151.

This sequence belongs to the ARMET family.

The protein resides in the secreted. Its function is as follows. Required during the maturation of the embryonic nervous system for maintenance of neuronal and cuticular connectivity. Essential for maintenance of dopaminergic neurons and dopamine levels. This chain is Mesencephalic astrocyte-derived neurotrophic factor homolog, found in Drosophila ananassae (Fruit fly).